Consider the following 200-residue polypeptide: Inner membrane-spanning protein YciB (200 aa).

Transmembrane regions (helical) follow at residues 1-21 (MPPL…FFAN), 37-57 (IGAP…IALA), 66-86 (LAIM…LTLW), 103-123 (LFGG…GYVF), 136-156 (KLTL…EIVW), and 167-187 (FKVW…MPLI).

This sequence belongs to the YciB family.

The protein localises to the cell inner membrane. In terms of biological role, plays a role in cell envelope biogenesis, maintenance of cell envelope integrity and membrane homeostasis. This Brucella melitensis biotype 1 (strain ATCC 23456 / CCUG 17765 / NCTC 10094 / 16M) protein is Inner membrane-spanning protein YciB.